Here is a 346-residue protein sequence, read N- to C-terminus: tRNA N6-adenosine threonylcarbamoyltransferase (346 aa).

Residues His111 and His115 each coordinate Fe cation. Substrate contacts are provided by residues 134–138, Asp167, Gly180, Asp184, and Asn279; that span reads LVSGG. Asp307 serves as a coordination point for Fe cation.

Belongs to the KAE1 / TsaD family. Requires Fe(2+) as cofactor.

The protein localises to the cytoplasm. The catalysed reaction is L-threonylcarbamoyladenylate + adenosine(37) in tRNA = N(6)-L-threonylcarbamoyladenosine(37) in tRNA + AMP + H(+). In terms of biological role, required for the formation of a threonylcarbamoyl group on adenosine at position 37 (t(6)A37) in tRNAs that read codons beginning with adenine. Is involved in the transfer of the threonylcarbamoyl moiety of threonylcarbamoyl-AMP (TC-AMP) to the N6 group of A37, together with TsaE and TsaB. TsaD likely plays a direct catalytic role in this reaction. This is tRNA N6-adenosine threonylcarbamoyltransferase from Gloeothece citriformis (strain PCC 7424) (Cyanothece sp. (strain PCC 7424)).